The chain runs to 69 residues: Probable Sec-independent protein translocase protein TatE (69 aa).

Residues 1–21 (MEGISIAKLLVIGALIVLLFG) traverse the membrane as a helical segment. Residues 45-69 (DDQPAAKSSAQDEHPAAISETRPKE) form a disordered region. The span at 54–69 (AQDEHPAAISETRPKE) shows a compositional bias: basic and acidic residues.

The protein belongs to the TatA/E family. TatE subfamily.

It is found in the cell inner membrane. In terms of biological role, part of the twin-arginine translocation (Tat) system that transports large folded proteins containing a characteristic twin-arginine motif in their signal peptide across membranes. TatE shares overlapping functions with TatA. This chain is Probable Sec-independent protein translocase protein TatE, found in Dickeya chrysanthemi (strain Ech1591) (Dickeya zeae (strain Ech1591)).